The sequence spans 362 residues: Spermidine/putrescine import ATP-binding protein PotA (362 aa).

One can recognise an ABC transporter domain in the interval 4-235; sequence IKLDHITKQY…PVNDFVARFI (232 aa). 37 to 44 contacts ATP; the sequence is GPSGSGKT.

The protein belongs to the ABC transporter superfamily. Spermidine/putrescine importer (TC 3.A.1.11.1) family. The complex is composed of two ATP-binding proteins (PotA), two transmembrane proteins (PotB and PotC) and a solute-binding protein (PotD).

Its subcellular location is the cell membrane. It carries out the reaction ATP + H2O + polyamine-[polyamine-binding protein]Side 1 = ADP + phosphate + polyamineSide 2 + [polyamine-binding protein]Side 1.. Part of the ABC transporter complex PotABCD involved in spermidine/putrescine import. Responsible for energy coupling to the transport system. This chain is Spermidine/putrescine import ATP-binding protein PotA, found in Lactobacillus delbrueckii subsp. bulgaricus (strain ATCC 11842 / DSM 20081 / BCRC 10696 / JCM 1002 / NBRC 13953 / NCIMB 11778 / NCTC 12712 / WDCM 00102 / Lb 14).